Reading from the N-terminus, the 963-residue chain is VPS35 endosomal protein-sorting factor-like (963 aa).

The interval serine 43 to leucine 69 is disordered. Residues serine 53–leucine 69 are compositionally biased toward low complexity. A Phosphoserine modification is found at serine 265. The helical transmembrane segment at alanine 703–phenylalanine 719 threads the bilayer.

This sequence belongs to the VPS35L family. As to quaternary structure, component of the heterotrimeric retriever complex formed by VPS26C, VPS29 and VPS35L. Interacts with VPS29. Interacts with COMMD1, CCDC93 and CCDC22; associates with the CCC (COMMD/CCDC22/CCDC93) complex which contains at least COMMD1 (and possibly other COMM domain-containing proteins), CCDC22 and CCDC93. Interacts with WASHC1, WASHC2A and WASHC2C. Interacts with SNX17 and SNX31.

The protein resides in the membrane. The protein localises to the endosome. Functionally, acts as a component of the retriever complex. The retriever complex is a heterotrimeric complex related to retromer cargo-selective complex (CSC) and essential for retromer-independent retrieval and recycling of numerous cargos such as integrin alpha-5/beta-1 (ITGA5:ITGB1). The recruitment of the retriever complex to the endosomal membrane involves CCC and WASH complexes. In the endosomes, drives the retrieval and recycling of NxxY-motif-containing cargo proteins by coupling to SNX17, a cargo essential for the homeostatic maintenance of numerous cell surface proteins associated with processes that include cell migration, cell adhesion, nutrient supply and cell signaling. Involved in copper-dependent ATP7A trafficking between the trans-Golgi network and vesicles in the cell periphery; the function is proposed to depend on its association with the CCC complex and cooperation with the WASH complex on early endosomes. Seems not to be required for CCC complex stability. Its function is as follows. (Microbial infection) The heterotrimeric retriever complex, in collaboration with the CCC complex, mediates the exit of human papillomavirus to the cell surface. The sequence is that of VPS35 endosomal protein-sorting factor-like from Homo sapiens (Human).